Here is a 22-residue protein sequence, read N- to C-terminus: C-type natriuretic peptide (22 aa).

A disulfide bond links cysteine 6 and cysteine 22.

Belongs to the natriuretic peptide family.

It is found in the secreted. Its function is as follows. Hormone which plays a role in endochondral ossification through regulation of cartilaginous growth plate chondrocytes proliferation and differentiation. May also be vasoactive and natriuretic. Specifically binds and stimulates the cGMP production of the NPR2 receptor. Binds the clearance receptor NPR3. This Gallus gallus (Chicken) protein is C-type natriuretic peptide (NPPC).